The primary structure comprises 551 residues: MNNTVINSIIGNDDIVKRHNVFGVDVQNPTLYMPQYITINGITSTDSNCDQHVVSTFEIRDQYITALSHVMLSIELPEVKGVGRFGYVPYVGYLCIQHVSISSYDDILWESSGEDLYNSCLDNDTALTNSGYSHELNTISTGLTPNDTIKESTTVYVYIKTPFDVEKTFSSLKLADTKIVITVTFNPVSDIIIRDITFNYDNFVKDFVYVTELSCIGYMVKNIQIKPSYIERPRRVFGQLNQSTAVISDVHSVSSLSVYIKPYYGNADNKFISYPGYSQSEKDYICVFVERLLDDLVTVCDTSPKWFPETAELVEVPNSGIVTIQDVDIFVRIDNVPCNMKVYFHTNILVFGTRKNSVTYNLSKKFTTITGTYSESTNRIMFSHVSHSINITDVSIPVSVWTCQRNIYNGDNRSESSKNKDLFINDPFIKGIDFKNKTDIISRLEVRFGNDVLYSETSPISKVYNDLLSNHKCGMRTLRFNFTPPTFFKPTTIVANPSRGKDKLSVRVVFTSLDPNNPIYYISKQLVLVCKDLYKVTNDDGINVTKIIGEL.

Belongs to the poxviridae protein D13 family. As to quaternary structure, homotrimer. Self-assembles to form a layer. Interacts with A17 (via N-terminus); this interaction is necessary for D13 association with membranes.

Its subcellular location is the membrane. In terms of biological role, scaffold protein which forms a transitory spherical honeycomb lattice providing curvature and rigidity to the convex membrane of crescent and immature virions (IV). This association occurs concomitantly with viral membrane formation. Targeted by the drug rifampicin, which prevents the formation of this lattice, and hence virus morphogenesis. In the presence of rifampicin, irregularly shaped membranes that lack the honeycomb layer accumulate around areas of electron-dense viroplasm. This layer is lost from virions during maturation from IV to mature virion (MV), through the proteolysis of A17 N-terminus. This is Scaffold protein D13 ortholog from Sus scrofa (Pig).